Consider the following 1032-residue polypeptide: Y' element ATP-dependent helicase YPR204W (1032 aa).

A Helicase ATP-binding domain is found at 1-175 (MADTPSVAVQ…LQRIGLTGLA (175 aa)). ATP is bound at residue 11 to 18 (APPGYGKT). The DEAH box signature appears at 121 to 124 (DEFH). The Helicase C-terminal domain maps to 232 to 381 (KLLLALFEIE…EFYGLESKKG (150 aa)). Low complexity predominate over residues 455 to 634 (ANASTNATTN…ATTTESTNAS (180 aa)). Positions 455 to 658 (ANASTNATTN…RFHPVTDINK (204 aa)) are disordered. Residues 635-658 (AKEDANKDGNAEDNRFHPVTDINK) are compositionally biased toward basic and acidic residues.

This sequence belongs to the helicase family. Yeast subtelomeric Y' repeat subfamily.

Functionally, catalyzes DNA unwinding and is involved in telomerase-independent telomere maintenance. This chain is Y' element ATP-dependent helicase YPR204W, found in Saccharomyces cerevisiae (strain ATCC 204508 / S288c) (Baker's yeast).